Here is a 244-residue protein sequence, read N- to C-terminus: tRNA (guanine-N(1)-)-methyltransferase (244 aa).

S-adenosyl-L-methionine is bound by residues Gly-113 and 133–138 (IGDFVL).

This sequence belongs to the RNA methyltransferase TrmD family. As to quaternary structure, homodimer.

It localises to the cytoplasm. The catalysed reaction is guanosine(37) in tRNA + S-adenosyl-L-methionine = N(1)-methylguanosine(37) in tRNA + S-adenosyl-L-homocysteine + H(+). Its function is as follows. Specifically methylates guanosine-37 in various tRNAs. The protein is tRNA (guanine-N(1)-)-methyltransferase of Bacillus pumilus (strain SAFR-032).